The following is a 186-amino-acid chain: UPF0340 protein SEQ_1951 (186 aa).

The protein belongs to the UPF0340 family.

The protein is UPF0340 protein SEQ_1951 of Streptococcus equi subsp. equi (strain 4047).